A 92-amino-acid polypeptide reads, in one-letter code: Protein S100-B (92 aa).

Position 2 is an N-acetylserine (serine 2). EF-hand domains lie at 13–48 and 49–84; these read DVFH…LEEI and KEQE…ITTA. Position 16 (histidine 16) interacts with Zn(2+). Positions 19, 22, and 24 each coordinate Ca(2+). Histidine 26 is a binding site for Zn(2+). Ca(2+) is bound by residues aspartate 62, aspartate 64, aspartate 66, glutamate 68, and glutamate 73. Positions 86 and 91 each coordinate Zn(2+).

This sequence belongs to the S-100 family. In terms of assembly, dimer of either two alpha chains, or two beta chains, or one alpha and one beta chain. The S100B dimer binds two molecules of STK38. Interacts with CACYBP in a calcium-dependent manner. Interacts with ATAD3A; this interaction probably occurs in the cytosol prior to ATAD3A mitochondrial targeting. Interacts with S100A6. The S100B dimer interacts with two molecules of CAPZA1. Interacts with AGER. Interacts with PPP5C (via TPR repeats); the interaction is calcium-dependent and modulates PPP5C activity. Interacts with TPPP; this interaction inhibits TPPP dimerization. Interacts with isoform CLSTN3beta of CLSTN3; interaction promotes secretion.

It is found in the cytoplasm. The protein resides in the nucleus. The protein localises to the secreted. Functionally, small zinc- and- and calcium-binding protein that is highly expressed in astrocytes and constitutes one of the most abundant soluble proteins in brain. Weakly binds calcium but binds zinc very tightly-distinct binding sites with different affinities exist for both ions on each monomer. Physiological concentrations of potassium ion antagonize the binding of both divalent cations, especially affecting high-affinity calcium-binding sites. Acts as a neurotrophic factor that promotes astrocytosis and axonal proliferation. Involved in innervation of thermogenic adipose tissue by acting as an adipocyte-derived neurotrophic factor that promotes sympathetic innervation of adipose tissue. Binds to and initiates the activation of STK38 by releasing autoinhibitory intramolecular interactions within the kinase. Interaction with AGER after myocardial infarction may play a role in myocyte apoptosis by activating ERK1/2 and p53/TP53 signaling. Could assist ATAD3A cytoplasmic processing, preventing aggregation and favoring mitochondrial localization. May mediate calcium-dependent regulation on many physiological processes by interacting with other proteins, such as TPR-containing proteins, and modulating their activity. This chain is Protein S100-B (S100B), found in Bos taurus (Bovine).